A 106-amino-acid chain; its full sequence is Small ribosomal subunit protein uS10 (106 aa).

This sequence belongs to the universal ribosomal protein uS10 family. Part of the 30S ribosomal subunit.

In terms of biological role, involved in the binding of tRNA to the ribosomes. This is Small ribosomal subunit protein uS10 from Prochlorococcus marinus (strain MIT 9301).